Reading from the N-terminus, the 283-residue chain is MVDTTQTTTEKKLTQSDIRGVFLRSNLFQGSWNFERMQALGFCFSMVPAIRRLYPENNEARKQAIRRHLEFFNTQPFVAAPILGVTLALEEQRANGAEIDDGAINGIKVGLMGPLAGVGDPIFWGTVRPVFAALGAGIAMSGSLLGPLLFFILFNLVRLATRYYGVAYGYSKGIDIVKDMGGGFLQKLTEGASILGLFVMGALVNKWTHVNIPLVVSRITDQTGKEHVTTVQTILDQLMPGLVPLLLTFACMWLLRKKVNPLWIIVGFFVIGIAGYACGLLGL.

Methionine 1 carries the N-formylmethionine modification. Residues 1 to 14 (MVDTTQTTTEKKLT) lie on the Cytoplasmic side of the membrane. The region spanning 11 to 281 (KKLTQSDIRG…GIAGYACGLL (271 aa)) is the PTS EIID domain. Residues 15–52 (QSDIRGVFLRSNLFQGSWNFERMQALGFCFSMVPAIRR) lie within the membrane without spanning it. Topologically, residues 53–59 (LYPENNE) are cytoplasmic. The stretch at 60–92 (ARKQAIRRHLEFFNTQPFVAAPILGVTLALEEQ) is an intramembrane region. Over 93–100 (RANGAEID) the chain is Cytoplasmic. The hydrophobic stretch at 101–140 (DGAINGIKVGLMGPLAGVGDPIFWGTVRPVFAALGAGIAM) threads the membrane. Residues 141–144 (SGSL) lie on the Periplasmic side of the membrane. Over 145–173 (LGPLLFFILFNLVRLATRYYGVAYGYSKG) the chain traverses the membrane. Residues 174-183 (IDIVKDMGGG) lie on the Cytoplasmic side of the membrane. A membrane pass occupies residues 184-209 (FLQKLTEGASILGLFVMGALVNKWTH). The Periplasmic segment spans residues 210-241 (VNIPLVVSRITDQTGKEHVTTVQTILDQLMPG). Positions 242-255 (LVPLLLTFACMWLL) form a transmembrane segment. Over 256–261 (RKKVNP) the chain is Cytoplasmic. A membrane pass occupies residues 262-280 (LWIIVGFFVIGIAGYACGL). The Periplasmic segment spans residues 281–283 (LGL).

In terms of assembly, homotrimer of protomers that are composed of two subunits, IIC and IID.

Its subcellular location is the cell inner membrane. In terms of biological role, the phosphoenolpyruvate-dependent sugar phosphotransferase system (sugar PTS), a major carbohydrate active transport system, catalyzes the phosphorylation of incoming sugar substrates concomitantly with their translocation across the cell membrane. The enzyme II ManXYZ PTS system is involved in mannose transport. This Escherichia coli O157:H7 protein is PTS system mannose-specific EIID component (manZ).